Here is a 192-residue protein sequence, read N- to C-terminus: Ras-like protein 2 (192 aa).

12–19 lines the GTP pocket; that stretch reads GGGGVGKS. Positions 34-42 match the Effector region motif; it reads YDPTIEDSY. Cysteine 46 carries the S-palmitoyl cysteine lipid modification. Residues 59–63 and 118–121 contribute to the GTP site; these read DTAGQ and NKCD. S-palmitoyl cysteine attachment occurs at residues cysteine 120 and cysteine 147. A Cysteine methyl ester modification is found at cysteine 189. Residue cysteine 189 is the site of S-farnesyl cysteine attachment. Residues 190 to 192 constitute a propeptide, removed in mature form; the sequence is CLM.

This sequence belongs to the small GTPase superfamily. Ras family. In terms of assembly, interacts with hzg.

Its subcellular location is the cell membrane. It catalyses the reaction GTP + H2O = GDP + phosphate + H(+). Alternates between an inactive form bound to GDP and an active form bound to GTP. Activated by a guanine nucleotide-exchange factor (GEF) and inactivated by a GTPase-activating protein (GAP). Its function is as follows. May be involved in endocytic processes and/or other transport pathways mediated by vesicle trafficking. May interact functionally with ROP protein. Ras proteins bind GDP/GTP and possess intrinsic GTPase activity. In Drosophila melanogaster (Fruit fly), this protein is Ras-like protein 2 (Ras64B).